A 251-amino-acid polypeptide reads, in one-letter code: 2,3-bisphosphoglycerate-dependent phosphoglycerate mutase (251 aa).

Substrate-binding positions include 8–15, 21–22, Arg-60, 87–90, Lys-98, 114–115, and 183–184; these read RHGESLWN, TG, ERHY, RR, and GN. His-9 acts as the Tele-phosphohistidine intermediate in catalysis. Residue Glu-87 is the Proton donor/acceptor of the active site.

It belongs to the phosphoglycerate mutase family. BPG-dependent PGAM subfamily.

The enzyme catalyses (2R)-2-phosphoglycerate = (2R)-3-phosphoglycerate. It functions in the pathway carbohydrate degradation; glycolysis; pyruvate from D-glyceraldehyde 3-phosphate: step 3/5. Functionally, catalyzes the interconversion of 2-phosphoglycerate and 3-phosphoglycerate. The chain is 2,3-bisphosphoglycerate-dependent phosphoglycerate mutase from Thermoanaerobacter sp. (strain X514).